The primary structure comprises 191 residues: Elongation factor P (191 aa).

Lysine 34 carries the post-translational modification N6-(3,6-diaminohexanoyl)-5-hydroxylysine.

It belongs to the elongation factor P family. In terms of processing, may be beta-lysylated on the epsilon-amino group of Lys-34 by the combined action of EpmA and EpmB, and then hydroxylated on the C5 position of the same residue by EpmC (if this protein is present). Lysylation is critical for the stimulatory effect of EF-P on peptide-bond formation. The lysylation moiety may extend toward the peptidyltransferase center and stabilize the terminal 3-CCA end of the tRNA. Hydroxylation of the C5 position on Lys-34 may allow additional potential stabilizing hydrogen-bond interactions with the P-tRNA.

It is found in the cytoplasm. The protein operates within protein biosynthesis; polypeptide chain elongation. In terms of biological role, involved in peptide bond synthesis. Alleviates ribosome stalling that occurs when 3 or more consecutive Pro residues or the sequence PPG is present in a protein, possibly by augmenting the peptidyl transferase activity of the ribosome. Modification of Lys-34 is required for alleviation. The sequence is that of Elongation factor P from Colwellia psychrerythraea (strain 34H / ATCC BAA-681) (Vibrio psychroerythus).